The following is a 180-amino-acid chain: UPF0227 protein YcfP (180 aa).

This sequence belongs to the UPF0227 family.

This is UPF0227 protein YcfP from Escherichia coli O9:H4 (strain HS).